Here is a 303-residue protein sequence, read N- to C-terminus: Epimerase family protein YfhF (303 aa).

The protein belongs to the NAD(P)-dependent epimerase/dehydratase family. SDR39U1 subfamily.

This chain is Epimerase family protein YfhF (yfhF), found in Bacillus subtilis (strain 168).